A 463-amino-acid polypeptide reads, in one-letter code: Methionine aminopeptidase 2-2 (463 aa).

Residues 1-97 (MGSKSPEGHW…TLSVTELKQT (97 aa)) are disordered. The segment covering 27 to 36 (DPQTSQNGSG) has biased composition (polar residues). The segment covering 46-57 (GDDDDDDEDAEE) has biased composition (acidic residues). Positions 69-85 (KKKKRKKSNKKKKKKTK) are enriched in basic residues. Positions 86–97 (SGTLSVTELKQT) are enriched in polar residues. His-215 contributes to the substrate binding site. Residues Asp-236, Asp-247, and His-316 each contribute to the a divalent metal cation site. Residue His-324 participates in substrate binding. A divalent metal cation is bound by residues Glu-349 and Glu-444.

This sequence belongs to the peptidase M24A family. Methionine aminopeptidase eukaryotic type 2 subfamily. Co(2+) serves as cofactor. It depends on Zn(2+) as a cofactor. Mn(2+) is required as a cofactor. Requires Fe(2+) as cofactor.

The protein resides in the cytoplasm. The catalysed reaction is Release of N-terminal amino acids, preferentially methionine, from peptides and arylamides.. Its function is as follows. Cotranslationally removes the N-terminal methionine from nascent proteins. The N-terminal methionine is often cleaved when the second residue in the primary sequence is small and uncharged (Met-Ala-, Cys, Gly, Pro, Ser, Thr, or Val). The polypeptide is Methionine aminopeptidase 2-2 (Neosartorya fischeri (strain ATCC 1020 / DSM 3700 / CBS 544.65 / FGSC A1164 / JCM 1740 / NRRL 181 / WB 181) (Aspergillus fischerianus)).